The sequence spans 1178 residues: DNA-directed RNA polymerase subunit beta (1178 aa).

Positions 1–37 (MLEGCILADSRQSKTAASPSPSRPQSSSNNSVPGAPN) are disordered. Low complexity predominate over residues 18 to 33 (SPSPSRPQSSSNNSVP).

This sequence belongs to the RNA polymerase beta chain family. In terms of assembly, the RNAP catalytic core consists of 2 alpha, 1 beta, 1 beta' and 1 omega subunit. When a sigma factor is associated with the core the holoenzyme is formed, which can initiate transcription.

It carries out the reaction RNA(n) + a ribonucleoside 5'-triphosphate = RNA(n+1) + diphosphate. In terms of biological role, DNA-dependent RNA polymerase catalyzes the transcription of DNA into RNA using the four ribonucleoside triphosphates as substrates. This Mycobacterium tuberculosis (strain CDC 1551 / Oshkosh) protein is DNA-directed RNA polymerase subunit beta.